The primary structure comprises 491 residues: Acetyl-coenzyme A carboxylase carboxyl transferase subunit beta, chloroplastic (491 aa).

A disordered region spans residues alanine 26–glycine 49. Polar residues predominate over residues glycine 32–serine 41. A CoA carboxyltransferase N-terminal domain is found at leucine 222 to arginine 491. 4 residues coordinate Zn(2+): cysteine 226, cysteine 229, cysteine 245, and cysteine 248. Residues cysteine 226–cysteine 248 form a C4-type zinc finger.

This sequence belongs to the AccD/PCCB family. As to quaternary structure, acetyl-CoA carboxylase is a heterohexamer composed of biotin carboxyl carrier protein, biotin carboxylase and 2 subunits each of ACCase subunit alpha and ACCase plastid-coded subunit beta (accD). The cofactor is Zn(2+).

Its subcellular location is the plastid. It is found in the chloroplast stroma. It carries out the reaction N(6)-carboxybiotinyl-L-lysyl-[protein] + acetyl-CoA = N(6)-biotinyl-L-lysyl-[protein] + malonyl-CoA. Its pathway is lipid metabolism; malonyl-CoA biosynthesis; malonyl-CoA from acetyl-CoA: step 1/1. In terms of biological role, component of the acetyl coenzyme A carboxylase (ACC) complex. Biotin carboxylase (BC) catalyzes the carboxylation of biotin on its carrier protein (BCCP) and then the CO(2) group is transferred by the transcarboxylase to acetyl-CoA to form malonyl-CoA. The chain is Acetyl-coenzyme A carboxylase carboxyl transferase subunit beta, chloroplastic from Ceratophyllum demersum (Rigid hornwort).